Consider the following 356-residue polypeptide: Protein disulfide isomerase crld-1 (356 aa).

A signal peptide spans 1 to 17 (MSRILLLLAVLIGATSQ). At 18–299 (KEVTIKNEKC…DRPFMPIDQQ (282 aa)) the chain is on the lumenal side. The CXXC signature appears at 27–30 (CRTC). C27 and C30 are disulfide-bonded. A glycan (N-linked (GlcNAc...) asparagine) is linked at N122. Residues 150–188 (GLSEKADVCFGKGSCHGDGSREGSGKCKCETGYTGNLCR) enclose the EGF-like 1 domain. 5 disulfides stabilise this stretch: C158-C176, C178-C187, C245-C258, C251-C267, and C269-C281. Positions 241 to 282 (DVNECQNESACTKEHEICVNTVGSFKCECKEGYKKDDEQNCQ) constitute an EGF-like 2; calcium-binding domain. N-linked (GlcNAc...) asparagine glycosylation occurs at N247. Residues 300 to 317 (LKLIAFSSLIIIITFVVW) traverse the membrane as a helical segment. At 318–321 (HGSP) the chain is on the cytoplasmic side. The chain crosses the membrane as a helical span at residues 322–341 (VLYVLTGITIVALILVDLYV). Residues 342–356 (NPDTIPDEAKRFLGY) are Lumenal-facing.

This sequence belongs to the CRELD family. Interacts with unc-29. Isoforms a: Widely expressed in tissues including body wall muscles, neurons, pharynx, hypodermis, seam cells, intestine and gonad. Isoform b: Widely expressed in tissues including body wall muscles, neurons, pharynx, hypodermis, seam cells, intestine and gonad.

It is found in the endoplasmic reticulum membrane. The protein localises to the endoplasmic reticulum lumen. The enzyme catalyses Catalyzes the rearrangement of -S-S- bonds in proteins.. Functionally, protein disulfide isomerase which associates with the unc-29 subunit of levamisole-sensitive nicotinic acetylcholine receptors (L-nAChR) to promote L-nAChR assembly in the endoplasmic reticulum at neuromuscular junctions. In terms of biological role, promotes L-nAChR assembly in the endoplasmic reticulum at neuromuscular junctions. The chain is Protein disulfide isomerase crld-1 from Caenorhabditis elegans.